The chain runs to 276 residues: Release factor glutamine methyltransferase (276 aa).

S-adenosyl-L-methionine is bound by residues 116-120 (GTGTG), Asp-139, Trp-167, and Asn-182. Position 182–185 (182–185 (NPPY)) interacts with substrate.

The protein belongs to the protein N5-glutamine methyltransferase family. PrmC subfamily.

The catalysed reaction is L-glutaminyl-[peptide chain release factor] + S-adenosyl-L-methionine = N(5)-methyl-L-glutaminyl-[peptide chain release factor] + S-adenosyl-L-homocysteine + H(+). In terms of biological role, methylates the class 1 translation termination release factors RF1/PrfA and RF2/PrfB on the glutamine residue of the universally conserved GGQ motif. The chain is Release factor glutamine methyltransferase from Pseudomonas aeruginosa (strain ATCC 15692 / DSM 22644 / CIP 104116 / JCM 14847 / LMG 12228 / 1C / PRS 101 / PAO1).